The chain runs to 422 residues: Dihydrolipoyllysine-residue succinyltransferase component of 2-oxoglutarate dehydrogenase complex (422 aa).

The 76-residue stretch at 1–76 folds into the Lipoyl-binding domain; the sequence is MPEVKVPELA…EVGQAIAIIG (76 aa). Lys-42 carries the N6-lipoyllysine modification. Residues 77 to 185 are disordered; sequence EGSGNASKEN…SAKEEKKYNQ (109 aa). 2 stretches are compositionally biased toward polar residues: residues 80–94 and 116–130; these read GNAS…TPQQ and NQAN…NATP. Positions 127 to 163 constitute a Peripheral subunit-binding (PSBD) domain; sequence NATPSARRYARENGVNLAEVSPKTNDVVRKEDIDKKQ. Residues 152 to 163 show a composition bias toward basic and acidic residues; sequence DVVRKEDIDKKQ. Low complexity predominate over residues 164 to 176; it reads QAPASTQTTQQAS. Residues His-393 and Asp-397 contribute to the active site.

Belongs to the 2-oxoacid dehydrogenase family. As to quaternary structure, forms a 24-polypeptide structural core with octahedral symmetry. Part of the 2-oxoglutarate dehydrogenase (OGDH) complex composed of E1 (2-oxoglutarate dehydrogenase), E2 (dihydrolipoamide succinyltransferase) and E3 (dihydrolipoamide dehydrogenase); the complex contains multiple copies of the three enzymatic components (E1, E2 and E3). (R)-lipoate serves as cofactor.

It carries out the reaction N(6)-[(R)-dihydrolipoyl]-L-lysyl-[protein] + succinyl-CoA = N(6)-[(R)-S(8)-succinyldihydrolipoyl]-L-lysyl-[protein] + CoA. It functions in the pathway amino-acid degradation; L-lysine degradation via saccharopine pathway; glutaryl-CoA from L-lysine: step 6/6. In terms of biological role, E2 component of the 2-oxoglutarate dehydrogenase (OGDH) complex which catalyzes the second step in the conversion of 2-oxoglutarate to succinyl-CoA and CO(2). In Staphylococcus aureus (strain USA300), this protein is Dihydrolipoyllysine-residue succinyltransferase component of 2-oxoglutarate dehydrogenase complex (odhB).